The chain runs to 65 residues: MARYRHSRSRSRSGYRRQRRRRSRYRSRRRRYRRRQRRSRRGRRRGYSRRRYSRRRYSRRRRRRY.

The disordered stretch occupies residues M1–Y65.

This sequence belongs to the protamine P1 family. In terms of tissue distribution, testis.

It is found in the nucleus. The protein localises to the chromosome. In terms of biological role, protamines substitute for histones in the chromatin of sperm during the haploid phase of spermatogenesis. They compact sperm DNA into a highly condensed, stable and inactive complex. In Lagorchestes hirsutus (Rufous hare-wallaby), this protein is Sperm protamine P1 (PRM1).